Reading from the N-terminus, the 321-residue chain is Aspartate carbamoyltransferase catalytic subunit (321 aa).

Residues Arg-64 and Thr-65 each coordinate carbamoyl phosphate. Residue Lys-92 coordinates L-aspartate. 3 residues coordinate carbamoyl phosphate: Arg-114, His-142, and Gln-145. The L-aspartate site is built by Arg-175 and Arg-229. Carbamoyl phosphate is bound by residues Gly-270 and Pro-271.

This sequence belongs to the aspartate/ornithine carbamoyltransferase superfamily. ATCase family. In terms of assembly, heterododecamer (2C3:3R2) of six catalytic PyrB chains organized as two trimers (C3), and six regulatory PyrI chains organized as three dimers (R2).

The enzyme catalyses carbamoyl phosphate + L-aspartate = N-carbamoyl-L-aspartate + phosphate + H(+). Its pathway is pyrimidine metabolism; UMP biosynthesis via de novo pathway; (S)-dihydroorotate from bicarbonate: step 2/3. Catalyzes the condensation of carbamoyl phosphate and aspartate to form carbamoyl aspartate and inorganic phosphate, the committed step in the de novo pyrimidine nucleotide biosynthesis pathway. This Azorhizobium caulinodans (strain ATCC 43989 / DSM 5975 / JCM 20966 / LMG 6465 / NBRC 14845 / NCIMB 13405 / ORS 571) protein is Aspartate carbamoyltransferase catalytic subunit.